An 824-amino-acid chain; its full sequence is Leucine--tRNA ligase (824 aa).

Positions 41 to 51 (PYPSGTLHVGH) match the 'HIGH' region motif. The 'KMSKS' region signature appears at 580 to 584 (KMSKS). Position 583 (K583) interacts with ATP.

The protein belongs to the class-I aminoacyl-tRNA synthetase family.

The protein resides in the cytoplasm. It carries out the reaction tRNA(Leu) + L-leucine + ATP = L-leucyl-tRNA(Leu) + AMP + diphosphate. The protein is Leucine--tRNA ligase of Thermotoga maritima (strain ATCC 43589 / DSM 3109 / JCM 10099 / NBRC 100826 / MSB8).